An 878-amino-acid chain; its full sequence is MutS protein homolog 4 (878 aa).

The interval 22 to 41 (NSSNSISKPSTKKSIRNQKS) is disordered. 634–641 (GCNMSGKS) lines the ATP pocket.

This sequence belongs to the DNA mismatch repair MutS family. In terms of assembly, heterooligomer of MSH4 and MSH5.

Functionally, involved in meiotic recombination. Facilitate crossovers between homologs during meiosis. This Saccharomyces cerevisiae (strain ATCC 204508 / S288c) (Baker's yeast) protein is MutS protein homolog 4 (MSH4).